The chain runs to 295 residues: MMRILLFLATNLAVVLIASITLSLFGFNGFMAANGVDLNLNQLLVFCAVFGFAGSLFSLFISKWMAKMSTGTQIITQPRTRHEQWLLQTVEQLSRDAGIKMPEVGIFPAYEANAFATGWNKNDALVAVSQGLLERFSPDEVKAVLAHEIGHVANGDMVTLALVQGVVNTFVMFFARIIGNFVDKVIFKTENGQGIAYYITTIFAELVLGFLASAIVMWFSRKREFRADDAGARLAGTDAMIGALQRLRSEQGVPVNMPDSLTAFGINAGLKKGLAGLFMSHPPLEQRIEALRRRG.

Transmembrane regions (helical) follow at residues 4-24 (ILLF…TLSL) and 42-62 (QLLV…LFIS). Histidine 147 lines the Zn(2+) pocket. The active site involves glutamate 148. Histidine 151 contacts Zn(2+). The next 2 helical transmembrane spans lie at 158-178 (VTLA…ARII) and 199-219 (ITTI…VMWF). Position 224 (glutamate 224) interacts with Zn(2+).

The protein belongs to the peptidase M48B family. The cofactor is Zn(2+).

It is found in the cell inner membrane. This chain is Protease HtpX, found in Pseudomonas syringae pv. tomato (strain ATCC BAA-871 / DC3000).